Reading from the N-terminus, the 858-residue chain is Translation initiation factor IF-2 (858 aa).

The tract at residues 59-147 is disordered; it reads KEHAEKRRER…GKKLEGQERK (89 aa). One can recognise a tr-type G domain in the interval 361–530; sequence PRPPVVVVMG…LLVADLLELK (170 aa). The segment at 370–377 is G1; that stretch reads GHVDHGKT. Residue 370–377 coordinates GTP; that stretch reads GHVDHGKT. The interval 395–399 is G2; sequence GITQH. Positions 416–419 are G3; the sequence is DTPG. GTP-binding positions include 416–420 and 470–473; these read DTPGH and NKID. The interval 470-473 is G4; sequence NKID. Positions 506–508 are G5; it reads SAK.

Belongs to the TRAFAC class translation factor GTPase superfamily. Classic translation factor GTPase family. IF-2 subfamily.

The protein resides in the cytoplasm. Functionally, one of the essential components for the initiation of protein synthesis. Protects formylmethionyl-tRNA from spontaneous hydrolysis and promotes its binding to the 30S ribosomal subunits. Also involved in the hydrolysis of GTP during the formation of the 70S ribosomal complex. The protein is Translation initiation factor IF-2 of Caldicellulosiruptor saccharolyticus (strain ATCC 43494 / DSM 8903 / Tp8T 6331).